Consider the following 240-residue polypeptide: Uridylate kinase (240 aa).

9–12 (KLSG) lines the ATP pocket. Residue Gly51 coordinates UMP. Residues Gly52 and Arg56 each coordinate ATP. Residues Asp71 and 132 to 139 (TGNPFFTT) contribute to the UMP site. ATP contacts are provided by Thr159, Tyr165, and Asp168.

Belongs to the UMP kinase family. In terms of assembly, homohexamer.

Its subcellular location is the cytoplasm. It carries out the reaction UMP + ATP = UDP + ADP. Its pathway is pyrimidine metabolism; CTP biosynthesis via de novo pathway; UDP from UMP (UMPK route): step 1/1. Inhibited by UTP. In terms of biological role, catalyzes the reversible phosphorylation of UMP to UDP. The protein is Uridylate kinase of Synechococcus elongatus (strain ATCC 33912 / PCC 7942 / FACHB-805) (Anacystis nidulans R2).